The primary structure comprises 189 residues: uncharacterized protein (189 aa).

The protein belongs to the inositol monophosphatase superfamily.

This is an uncharacterized protein from Leptospira biflexa.